The sequence spans 181 residues: Cytochrome c-type biogenesis protein CcmE (181 aa).

Topologically, residues 1 to 8 (MNPRRKSR) are cytoplasmic. A helical; Signal-anchor for type II membrane protein transmembrane segment spans residues 9-29 (LKVVVLIMFSVAVAAGLTLYA). The Periplasmic portion of the chain corresponds to 30–181 (LSQNIDLFYT…TFNTLQGESK (152 aa)). Residues histidine 131 and tyrosine 135 each contribute to the heme site.

The protein belongs to the CcmE/CycJ family.

The protein localises to the cell inner membrane. Its function is as follows. Heme chaperone required for the biogenesis of c-type cytochromes. Transiently binds heme delivered by CcmC and transfers the heme to apo-cytochromes in a process facilitated by CcmF and CcmH. In Haemophilus ducreyi (strain 35000HP / ATCC 700724), this protein is Cytochrome c-type biogenesis protein CcmE.